The sequence spans 882 residues: Homeobox-leucine zipper protein ROC3 (882 aa).

The disordered stretch occupies residues 104–144 (DVDDDHKPQHSGHDQPPDAAQPSGAAGGNAKKKRYHRHTAH). The segment covering 107–119 (DDHKPQHSGHDQP) has biased composition (basic and acidic residues). The segment covering 133 to 143 (AKKKRYHRHTA) has biased composition (basic residues). The homeobox DNA-binding region spans 134–193 (KKKRYHRHTAHQIQQMEALFKECPHPDDKQRLKLSQELGLKPRQVKFWFQNRRTQMKAQQ). Positions 200-263 (ILRAENENLK…LDRLACIATR (64 aa)) form a coiled coil. One can recognise an START domain in the interval 340–584 (QEQDKQLVVD…LQRQCERLAS (245 aa)). Low complexity predominate over residues 782–816 (AAAPTISSSTTTTTGNGNGETSSTPPRNSSSNNNN). Residues 782-820 (AAAPTISSSTTTTTGNGNGETSSTPPRNSSSNNNNADEL) are disordered.

This sequence belongs to the HD-ZIP homeobox family. Class IV subfamily.

It is found in the nucleus. In terms of biological role, probable transcription factor. The protein is Homeobox-leucine zipper protein ROC3 (ROC3) of Oryza sativa subsp. indica (Rice).